A 476-amino-acid polypeptide reads, in one-letter code: Sulfite exporter TauE/SafE family protein 3 (476 aa).

12 helical membrane passes run 8–28 (WLGL…FAFV), 76–92 (FNWQ…FGAA), 99–115 (VGGG…IIGF), 120–142 (ATAI…NLRL), 151–171 (IIDY…ISIG), 172–192 (VAFN…VLFL), 257–277 (VYWK…ALQI), 291–311 (VINL…AVAL), 339–359 (FGII…FIMG), 360–380 (PLFL…TFAM), 397–417 (FPVP…WVGQ), and 433–453 (IIFI…GVGI).

This sequence belongs to the 4-toluene sulfonate uptake permease (TSUP) (TC 2.A.102) family.

The protein localises to the membrane. In Arabidopsis thaliana (Mouse-ear cress), this protein is Sulfite exporter TauE/SafE family protein 3.